We begin with the raw amino-acid sequence, 911 residues long: ATP-dependent DNA helicase Q-like 5 (911 aa).

Positions 1–84 (MDFDSDSDGS…PPPSPLFTNL (84 aa)) are disordered. Over residues 20-48 (SFPSSPPQLQSPAKHVPPVSRKMTSSSSR) the composition is skewed to low complexity. Residues 54–79 (PTHPPPNPSQEAPVPSPYPPPPPPSP) show a composition bias toward pro residues. Residues 278–448 (IKMILGGSST…MSSLEIPSTN (171 aa)) form the Helicase ATP-binding domain. An ATP-binding site is contributed by 291-298 (LPTGAGKS). A DEAH box motif is present at residues 390-393 (DEAH). A Helicase C-terminal domain is found at 470–628 (RMKDLLILME…VFSTETKQHE (159 aa)).

The protein belongs to the helicase family. RecQ subfamily. In terms of tissue distribution, mostly expressed in roots, seedlings, shoots, shoot apical mersitem, flowers, and siliques.

It localises to the nucleus. It catalyses the reaction Couples ATP hydrolysis with the unwinding of duplex DNA by translocating in the 3'-5' direction.. The catalysed reaction is ATP + H2O = ADP + phosphate + H(+). Its function is as follows. 3'-5' DNA helicase that may play a role in the repair of DNA. This chain is ATP-dependent DNA helicase Q-like 5 (RECQL5), found in Arabidopsis thaliana (Mouse-ear cress).